Consider the following 117-residue polypeptide: UPF0344 protein GTNG_0604 (117 aa).

Transmembrane regions (helical) follow at residues 1-21 (MTHAHITSWFIMIILFLIAVS), 39-59 (LFYIITIITGLLLLHSIASIS), 61-81 (LYWLKALAGLWVIGAMEMVLV), and 97-117 (VIALVVTLFLGLLLPLGFDLF).

It belongs to the UPF0344 family.

The protein resides in the cell membrane. The sequence is that of UPF0344 protein GTNG_0604 from Geobacillus thermodenitrificans (strain NG80-2).